The primary structure comprises 164 residues: Putative anionic 4-hydroxy-benzoate permease (164 aa).

The tract at residues 1–30 (CGRRRGSLAWPDASSPSANPRPGAGAAESS) is disordered. 3 helical membrane passes run 62–82 (LWVA…LMFM), 97–117 (GMAQ…VGGL), and 126–146 (PALT…MLAG).

The protein belongs to the major facilitator superfamily. Cyanate porter (TC 2.A.1.17) family.

It is found in the cell membrane. In terms of biological role, may be involved in uptake of anionic 4-hydroxy-benzoate. In Thauera aromatica, this protein is Putative anionic 4-hydroxy-benzoate permease.